Consider the following 291-residue polypeptide: ATP synthase subunit a (291 aa).

Helical transmembrane passes span 47 to 67, 140 to 160, 167 to 187, 207 to 227, and 230 to 250; these read FTNL…LVFV, HFLI…IVGF, FFSF…LVLL, MMAG…MLFL, and IFYF…TGLE.

The protein belongs to the ATPase A chain family. In terms of assembly, F-type ATPases have 2 components, CF(1) - the catalytic core - and CF(0) - the membrane proton channel. CF(1) has five subunits: alpha(3), beta(3), gamma(1), delta(1), epsilon(1). CF(0) has three main subunits: a, b and c.

It is found in the mitochondrion inner membrane. Mitochondrial membrane ATP synthase (F(1)F(0) ATP synthase or Complex V) produces ATP from ADP in the presence of a proton gradient across the membrane which is generated by electron transport complexes of the respiratory chain. F-type ATPases consist of two structural domains, F(1) - containing the extramembraneous catalytic core and F(0) - containing the membrane proton channel, linked together by a central stalk and a peripheral stalk. During catalysis, ATP synthesis in the catalytic domain of F(1) is coupled via a rotary mechanism of the central stalk subunits to proton translocation. Key component of the proton channel; it may play a direct role in the translocation of protons across the membrane. The sequence is that of ATP synthase subunit a (ATP6) from Zea mays (Maize).